Consider the following 63-residue polypeptide: Large ribosomal subunit protein bL33m (63 aa).

This sequence belongs to the bacterial ribosomal protein bL33 family.

The protein localises to the mitochondrion. This is Large ribosomal subunit protein bL33m (mrpl33) from Dictyostelium discoideum (Social amoeba).